Consider the following 313-residue polypeptide: uncharacterized protein (313 aa).

Residues 1-313 (MSRNGRNDYD…SSSRSGSSRR (313 aa)) form a disordered region. Composition is skewed to basic and acidic residues over residues 24–33 (LARDRERDSE), 40–85 (TGER…DVKY), 95–116 (TTRE…DELG), and 156–181 (TDER…DEFG). A compositionally biased stretch (basic residues) spans 194-205 (RGRRSNSRRRSS). 2 stretches are compositionally biased toward low complexity: residues 206-266 (NARS…GSKS) and 272-313 (SRSG…SSRR).

The protein localises to the virion. This is an uncharacterized protein from Acanthamoeba polyphaga mimivirus (APMV).